Consider the following 709-residue polypeptide: Eukaryotic translation initiation factor 3 subunit B (709 aa).

Positions Met1 to Asp98 are sufficient for interaction with HCR1 and TIF32. The sufficient for interaction with PIC8 stretch occupies residues Met1–Phe221. In terms of domain architecture, RRM spans Asn37–Asp124.

Belongs to the eIF-3 subunit B family. As to quaternary structure, component of the eukaryotic translation initiation factor 3 (eIF-3) complex.

It localises to the cytoplasm. RNA-binding component of the eukaryotic translation initiation factor 3 (eIF-3) complex, which is involved in protein synthesis of a specialized repertoire of mRNAs and, together with other initiation factors, stimulates binding of mRNA and methionyl-tRNAi to the 40S ribosome. The eIF-3 complex specifically targets and initiates translation of a subset of mRNAs involved in cell proliferation. The sequence is that of Eukaryotic translation initiation factor 3 subunit B from Lodderomyces elongisporus (strain ATCC 11503 / CBS 2605 / JCM 1781 / NBRC 1676 / NRRL YB-4239) (Yeast).